Here is a 148-residue protein sequence, read N- to C-terminus: MKLDLKILDARMRDQLPAYATTGSAGLDLRACLDEALTLKPGETALVPTGLAIHVGDAGYAALILPRSGLGHKHGIVLGNLVGLIDSDYQGQLMISTWNRGETTFVLNPMERLAQLVIVPVVQAEFNIVDDFETSDRGAGGFGSTGKH.

Substrate-binding positions include 67–69 (RSG), N80, 84–86 (LID), and M94.

It belongs to the dUTPase family. The cofactor is Mg(2+).

It carries out the reaction dUTP + H2O = dUMP + diphosphate + H(+). It functions in the pathway pyrimidine metabolism; dUMP biosynthesis; dUMP from dCTP (dUTP route): step 2/2. This enzyme is involved in nucleotide metabolism: it produces dUMP, the immediate precursor of thymidine nucleotides and it decreases the intracellular concentration of dUTP so that uracil cannot be incorporated into DNA. This chain is Deoxyuridine 5'-triphosphate nucleotidohydrolase, found in Paraburkholderia phytofirmans (strain DSM 17436 / LMG 22146 / PsJN) (Burkholderia phytofirmans).